The following is a 321-amino-acid chain: Phospho-N-acetylmuramoyl-pentapeptide-transferase (321 aa).

Helical transmembrane passes span 1 to 21 (MIFVYALLALVITFVLVPVLI), 50 to 70 (MGGLTFLLSIVITSLVVIIFV), 76 to 96 (IILLLFVTIGFGLIGFIDDYI), 112 to 132 (FLAQIGIAIIFFVLSNVFHLV), 140 to 160 (IPFTNVAIPLSFAYVIFIVFW), 176 to 196 (GLATGLSIIGFTMYAIMSFVL), 200 to 220 (AIGIFCIIMLFALLGFLPYNI), 225 to 245 (VFMGDTGSLALGGIFATISIM), 250 to 270 (LSLIFIGLVFVIETLSVMLQV), and 300 to 320 (VVTVFWAVGLISGLIGLWIGV).

The protein belongs to the glycosyltransferase 4 family. MraY subfamily. Mg(2+) serves as cofactor.

It localises to the cell membrane. It catalyses the reaction UDP-N-acetyl-alpha-D-muramoyl-L-alanyl-gamma-D-glutamyl-L-lysyl-D-alanyl-D-alanine + di-trans,octa-cis-undecaprenyl phosphate = Mur2Ac(oyl-L-Ala-gamma-D-Glu-L-Lys-D-Ala-D-Ala)-di-trans,octa-cis-undecaprenyl diphosphate + UMP. The protein operates within cell wall biogenesis; peptidoglycan biosynthesis. In terms of biological role, catalyzes the initial step of the lipid cycle reactions in the biosynthesis of the cell wall peptidoglycan: transfers peptidoglycan precursor phospho-MurNAc-pentapeptide from UDP-MurNAc-pentapeptide onto the lipid carrier undecaprenyl phosphate, yielding undecaprenyl-pyrophosphoryl-MurNAc-pentapeptide, known as lipid I. The sequence is that of Phospho-N-acetylmuramoyl-pentapeptide-transferase from Staphylococcus aureus (strain MSSA476).